The chain runs to 123 residues: Acidic phospholipase A2 (123 aa).

7 cysteine pairs are disulfide-bonded: Cys-26/Cys-116, Cys-28/Cys-44, Cys-43/Cys-95, Cys-49/Cys-123, Cys-50/Cys-88, Cys-57/Cys-81, and Cys-75/Cys-86. Ca(2+) is bound by residues Tyr-27, Gly-29, and Gly-31. The active site involves His-47. Ca(2+) is bound at residue Asp-48. The active site involves Asp-89.

It belongs to the phospholipase A2 family. Group II subfamily. D49 sub-subfamily. As to quaternary structure, homodimer. Ca(2+) is required as a cofactor. As to expression, expressed by the venom gland.

The protein localises to the secreted. The catalysed reaction is a 1,2-diacyl-sn-glycero-3-phosphocholine + H2O = a 1-acyl-sn-glycero-3-phosphocholine + a fatty acid + H(+). In terms of biological role, snake venom phospholipase A2 (PLA2) that inhibits ADP-induced platelet aggregation. PLA2 catalyzes the calcium-dependent hydrolysis of the 2-acyl groups in 3-sn-phosphoglycerides. This is Acidic phospholipase A2 from Deinagkistrodon acutus (Hundred-pace snake).